A 314-amino-acid polypeptide reads, in one-letter code: Ribosomal RNA small subunit methyltransferase H (314 aa).

Residues 35 to 37 (GGH), Asp55, Phe79, Asp101, and Gln108 each bind S-adenosyl-L-methionine. Residues 276-296 (QGGQTLKPVGKKLMPSEAEVA) are disordered.

It belongs to the methyltransferase superfamily. RsmH family.

It localises to the cytoplasm. It carries out the reaction cytidine(1402) in 16S rRNA + S-adenosyl-L-methionine = N(4)-methylcytidine(1402) in 16S rRNA + S-adenosyl-L-homocysteine + H(+). In terms of biological role, specifically methylates the N4 position of cytidine in position 1402 (C1402) of 16S rRNA. In Pectobacterium atrosepticum (strain SCRI 1043 / ATCC BAA-672) (Erwinia carotovora subsp. atroseptica), this protein is Ribosomal RNA small subunit methyltransferase H.